The sequence spans 787 residues: Endonuclease MutS2 (787 aa).

335-342 provides a ligand contact to ATP; the sequence is GPNTGGKT. One can recognise a Smr domain in the interval 712–787; the sequence is LDLRGERYED…GLGNTVIELK (76 aa).

Belongs to the DNA mismatch repair MutS family. MutS2 subfamily. Homodimer. Binds to stalled ribosomes, contacting rRNA.

Its function is as follows. Endonuclease that is involved in the suppression of homologous recombination and thus may have a key role in the control of bacterial genetic diversity. In terms of biological role, acts as a ribosome collision sensor, splitting the ribosome into its 2 subunits. Detects stalled/collided 70S ribosomes which it binds and splits by an ATP-hydrolysis driven conformational change. Acts upstream of the ribosome quality control system (RQC), a ribosome-associated complex that mediates the extraction of incompletely synthesized nascent chains from stalled ribosomes and their subsequent degradation. Probably generates substrates for RQC. This chain is Endonuclease MutS2, found in Shouchella clausii (strain KSM-K16) (Alkalihalobacillus clausii).